Reading from the N-terminus, the 319-residue chain is Aliphatic sulfonates import ATP-binding protein SsuB 1 (319 aa).

The 220-residue stretch at Val-63–Leu-282 folds into the ABC transporter domain. Position 95–102 (Gly-95–Ser-102) interacts with ATP.

This sequence belongs to the ABC transporter superfamily. Aliphatic sulfonates importer (TC 3.A.1.17.2) family. As to quaternary structure, the complex is composed of two ATP-binding proteins (SsuB), two transmembrane proteins (SsuC) and a solute-binding protein (SsuA).

It is found in the cell inner membrane. It catalyses the reaction ATP + H2O + aliphatic sulfonate-[sulfonate-binding protein]Side 1 = ADP + phosphate + aliphatic sulfonateSide 2 + [sulfonate-binding protein]Side 1.. Part of the ABC transporter complex SsuABC involved in aliphatic sulfonates import. Responsible for energy coupling to the transport system. The sequence is that of Aliphatic sulfonates import ATP-binding protein SsuB 1 from Burkholderia cenocepacia (strain HI2424).